We begin with the raw amino-acid sequence, 164 residues long: MKKVAVYPGTFDPITFGHIDVINKALKLFDKVIIAASDGANKNYLFNSLERVQLIKKALFVDLKFDKKKIEVISFTSLTTDLCKKYKSNIILRGLRAVSDFEYEFQLAGMNRKLNNNIETIFLMSDVENQIISSRFVKEIVRLKGDIKKFTTKSTIKSLKEKYE.

Residue Thr-10 coordinates substrate. ATP-binding positions include 10 to 11 (TF) and His-18. 3 residues coordinate substrate: Lys-42, Thr-79, and Arg-93. Residues 94–96 (GLR), Glu-104, and 129–135 (NQIISSR) each bind ATP.

It belongs to the bacterial CoaD family. In terms of assembly, homohexamer. Requires Mg(2+) as cofactor.

The protein resides in the cytoplasm. The catalysed reaction is (R)-4'-phosphopantetheine + ATP + H(+) = 3'-dephospho-CoA + diphosphate. It functions in the pathway cofactor biosynthesis; coenzyme A biosynthesis; CoA from (R)-pantothenate: step 4/5. Reversibly transfers an adenylyl group from ATP to 4'-phosphopantetheine, yielding dephospho-CoA (dPCoA) and pyrophosphate. The sequence is that of Phosphopantetheine adenylyltransferase from Pelagibacter ubique (strain HTCC1062).